We begin with the raw amino-acid sequence, 255 residues long: Aliphatic sulfonates import ATP-binding protein SsuB (255 aa).

The ABC transporter domain occupies 12–233 (LLLNAVSKHY…RLGSVRLAEL (222 aa)). 44–51 (GRSGGGKS) contacts ATP.

It belongs to the ABC transporter superfamily. Aliphatic sulfonates importer (TC 3.A.1.17.2) family. In terms of assembly, the complex is composed of two ATP-binding proteins (SsuB), two transmembrane proteins (SsuC) and a solute-binding protein (SsuA).

It localises to the cell inner membrane. The enzyme catalyses ATP + H2O + aliphatic sulfonate-[sulfonate-binding protein]Side 1 = ADP + phosphate + aliphatic sulfonateSide 2 + [sulfonate-binding protein]Side 1.. Part of the ABC transporter complex SsuABC involved in aliphatic sulfonates import. Responsible for energy coupling to the transport system. The protein is Aliphatic sulfonates import ATP-binding protein SsuB of Shigella flexneri serotype 5b (strain 8401).